The sequence spans 333 residues: Phenylalanine--tRNA ligase alpha subunit (333 aa).

E248 contacts Mg(2+).

It belongs to the class-II aminoacyl-tRNA synthetase family. Phe-tRNA synthetase alpha subunit type 1 subfamily. As to quaternary structure, tetramer of two alpha and two beta subunits. Requires Mg(2+) as cofactor.

It localises to the cytoplasm. It catalyses the reaction tRNA(Phe) + L-phenylalanine + ATP = L-phenylalanyl-tRNA(Phe) + AMP + diphosphate + H(+). The chain is Phenylalanine--tRNA ligase alpha subunit from Ureaplasma urealyticum serovar 10 (strain ATCC 33699 / Western).